The chain runs to 78 residues: UPF0349 protein BPUM_2879 (78 aa).

This sequence belongs to the UPF0349 family.

In Bacillus pumilus (strain SAFR-032), this protein is UPF0349 protein BPUM_2879.